Consider the following 84-residue polypeptide: Exodeoxyribonuclease 7 small subunit (84 aa).

The protein belongs to the XseB family. In terms of assembly, heterooligomer composed of large and small subunits.

It is found in the cytoplasm. The enzyme catalyses Exonucleolytic cleavage in either 5'- to 3'- or 3'- to 5'-direction to yield nucleoside 5'-phosphates.. Functionally, bidirectionally degrades single-stranded DNA into large acid-insoluble oligonucleotides, which are then degraded further into small acid-soluble oligonucleotides. This is Exodeoxyribonuclease 7 small subunit from Haemophilus influenzae (strain 86-028NP).